Reading from the N-terminus, the 255-residue chain is Sulfur carrier protein FdhD (255 aa).

Catalysis depends on Cys103, which acts as the Cysteine persulfide intermediate.

It belongs to the FdhD family.

It localises to the cytoplasm. Required for formate dehydrogenase (FDH) activity. Acts as a sulfur carrier protein that transfers sulfur from IscS to the molybdenum cofactor prior to its insertion into FDH. This is Sulfur carrier protein FdhD from Sulfurisphaera tokodaii (strain DSM 16993 / JCM 10545 / NBRC 100140 / 7) (Sulfolobus tokodaii).